The primary structure comprises 166 residues: Interferon gamma (166 aa).

Residues 1 to 23 (MNYTSYILAFQLCVILCSSGYYC) form the signal peptide. Glutamine 24 carries the pyrrolidone carboxylic acid modification. 2 N-linked (GlcNAc...) asparagine glycosylation sites follow: asparagine 39 and asparagine 106.

The protein belongs to the type II (or gamma) interferon family. Homodimer. Interacts with IFNGR1 (via extracellular domain); this interaction promotes IFNGR1 dimerization. Released primarily from activated T lymphocytes.

The protein localises to the secreted. In terms of biological role, type II interferon produced by immune cells such as T-cells and NK cells that plays crucial roles in antimicrobial, antiviral, and antitumor responses by activating effector immune cells and enhancing antigen presentation. Primarily signals through the JAK-STAT pathway after interaction with its receptor IFNGR1 to affect gene regulation. Upon IFNG binding, IFNGR1 intracellular domain opens out to allow association of downstream signaling components JAK2, JAK1 and STAT1, leading to STAT1 activation, nuclear translocation and transcription of IFNG-regulated genes. Many of the induced genes are transcription factors such as IRF1 that are able to further drive regulation of a next wave of transcription. Plays a role in class I antigen presentation pathway by inducing a replacement of catalytic proteasome subunits with immunoproteasome subunits. In turn, increases the quantity, quality, and repertoire of peptides for class I MHC loading. Increases the efficiency of peptide generation also by inducing the expression of activator PA28 that associates with the proteasome and alters its proteolytic cleavage preference. Up-regulates as well MHC II complexes on the cell surface by promoting expression of several key molecules such as cathepsins B/CTSB, H/CTSH, and L/CTSL. Participates in the regulation of hematopoietic stem cells during development and under homeostatic conditions by affecting their development, quiescence, and differentiation. The sequence is that of Interferon gamma (IFNG) from Ailuropoda melanoleuca (Giant panda).